Here is a 205-residue protein sequence, read N- to C-terminus: Holliday junction branch migration complex subunit RuvA (205 aa).

A domain I region spans residues 1-62 (MFEYVTGYVE…EDIMALYGFK (62 aa)). Residues 63-141 (TREERLLFTK…DVVPDVFVDL (79 aa)) are domain II. The interval 142–152 (FSDEERFDEKK) is flexible linker. The tract at residues 153–205 (GSSTELDEALEALRALGYAEREINRVLPELLKESLTTDQYIKKALSLLLNGKR) is domain III.

This sequence belongs to the RuvA family. As to quaternary structure, homotetramer. Forms an RuvA(8)-RuvB(12)-Holliday junction (HJ) complex. HJ DNA is sandwiched between 2 RuvA tetramers; dsDNA enters through RuvA and exits via RuvB. An RuvB hexamer assembles on each DNA strand where it exits the tetramer. Each RuvB hexamer is contacted by two RuvA subunits (via domain III) on 2 adjacent RuvB subunits; this complex drives branch migration. In the full resolvosome a probable DNA-RuvA(4)-RuvB(12)-RuvC(2) complex forms which resolves the HJ.

It localises to the cytoplasm. Its function is as follows. The RuvA-RuvB-RuvC complex processes Holliday junction (HJ) DNA during genetic recombination and DNA repair, while the RuvA-RuvB complex plays an important role in the rescue of blocked DNA replication forks via replication fork reversal (RFR). RuvA specifically binds to HJ cruciform DNA, conferring on it an open structure. The RuvB hexamer acts as an ATP-dependent pump, pulling dsDNA into and through the RuvAB complex. HJ branch migration allows RuvC to scan DNA until it finds its consensus sequence, where it cleaves and resolves the cruciform DNA. This chain is Holliday junction branch migration complex subunit RuvA, found in Bacillus cytotoxicus (strain DSM 22905 / CIP 110041 / 391-98 / NVH 391-98).